We begin with the raw amino-acid sequence, 332 residues long: L-lactate dehydrogenase A chain (332 aa).

NAD(+) is bound by residues 29–57 (GMVG…MEDK) and Arg99. 3 residues coordinate substrate: Arg106, Asn138, and Arg169. Asn138 serves as a coordination point for NAD(+). His193 (proton acceptor) is an active-site residue. Residue Thr248 participates in substrate binding.

Belongs to the LDH/MDH superfamily. LDH family. Homotetramer.

The protein resides in the cytoplasm. It carries out the reaction (S)-lactate + NAD(+) = pyruvate + NADH + H(+). Its pathway is fermentation; pyruvate fermentation to lactate; (S)-lactate from pyruvate: step 1/1. Its function is as follows. Interconverts simultaneously and stereospecifically pyruvate and lactate with concomitant interconversion of NADH and NAD(+). The chain is L-lactate dehydrogenase A chain (ldha) from Sphyraena argentea (Pacific barracuda).